The primary structure comprises 106 residues: UPF0145 protein APL_0465 (106 aa).

Belongs to the UPF0145 family.

This Actinobacillus pleuropneumoniae serotype 5b (strain L20) protein is UPF0145 protein APL_0465.